The primary structure comprises 281 residues: Putative thiosulfate sulfurtransferase (281 aa).

2 Rhodanese domains span residues Asn18–Lys125 and Ala154–Glu274. The Cysteine persulfide intermediate role is filled by Cys233. Arg238 provides a ligand contact to substrate.

The enzyme catalyses thiosulfate + hydrogen cyanide = thiocyanate + sulfite + 2 H(+). Its function is as follows. May be a sulfotransferase involved in the formation of thiosulfate. The sequence is that of Putative thiosulfate sulfurtransferase (cysA) from Saccharopolyspora erythraea (Streptomyces erythraeus).